A 692-amino-acid chain; its full sequence is Follicle-stimulating hormone receptor (692 aa).

The signal sequence occupies residues 1–17 (MALLLVSLLAFLGTGSG). Intrachain disulfides connect C18–C25 and C23–C32. Residues 18–46 (CHHWLCHCSNRVFLCQDSKVTEIPTDLPR) enclose the LRRNT domain. At 18 to 365 (CHHWLCHCSN…EDIMGYNILR (348 aa)) the chain is on the extracellular side. LRR repeat units lie at residues 49–72 (IELR…FGDL), 73–97 (EKIE…LPKL), 98–118 (HEIR…AFQN), 119–143 (LPSL…KIQS), 144–169 (LQKV…MGLS), 170–192 (FESV…AFNG), 193–216 (TQLD…VFQG), 217–240 (ASGP…GLEN), and 241–259 (LKKL…PNLD). 2 N-linked (GlcNAc...) asparagine glycosylation sites follow: N191 and N199. 4 disulfide bridges follow: C275–C345, C276–C292, C276–C355, and C292–C337. The N-linked (GlcNAc...) asparagine glycan is linked to N293. The residue at position 334 (Y334) is a Sulfotyrosine. The chain crosses the membrane as a helical span at residues 366–386 (VLIWFISILAITGNTTVLVVL). Over 387–397 (TTSQYKLTVPR) the chain is Cytoplasmic. The chain crosses the membrane as a helical span at residues 398-420 (FLMCNLAFADLCIGIYLLLIASV). The Extracellular portion of the chain corresponds to 421–442 (DIHTKSQYHNYAIDWQTGAGCD). C441 and C516 are oxidised to a cystine. The helical transmembrane segment at 443 to 464 (AAGFFTVFASELSVYTLTAITL) threads the bilayer. Topologically, residues 465 to 484 (ERWHTITHAMQLECKVQLRH) are cytoplasmic. A helical membrane pass occupies residues 485 to 507 (AASVMVLGWTFAFAAALFPIFGI). Topologically, residues 508-527 (SSYMKVSICLPMDIDSPLSQ) are extracellular. Residues 528-549 (LYVMALLVLNVLAFVVICGCYT) traverse the membrane as a helical segment. At 550–572 (HIYLTVRNPTIVSSSSDTKIAKR) the chain is on the cytoplasmic side. A helical membrane pass occupies residues 573–596 (MATLIFTDFLCMAPISFFAISASL). The Extracellular segment spans residues 597–607 (KVPLITVSKAK). Residues 608–629 (ILLVLFYPINSCANPFLYAIFT) form a helical membrane-spanning segment. The Cytoplasmic segment spans residues 630–692 (KNFRRDFFIL…LVPLNHSSQN (63 aa)).

It belongs to the G-protein coupled receptor 1 family. FSH/LSH/TSH subfamily. In terms of assembly, homotrimer. Functions as a homotrimer binding the FSH hormone heterodimer composed of CGA and FSHB. Interacts with ARRB2. Interacts with APPL2; interaction is independent of follicle stimulating hormone stimulation. In terms of processing, N-glycosylated; indirectly required for FSH-binding, possibly via a conformational change that allows high affinity binding of hormone. Post-translationally, sulfated. Sertoli cells and ovarian granulosa cells.

Its subcellular location is the cell membrane. Its function is as follows. G protein-coupled receptor for follitropin, the follicle-stimulating hormone. Through cAMP production activates the downstream PI3K-AKT and ERK1/ERK2 signaling pathways. This chain is Follicle-stimulating hormone receptor (Fshr), found in Rattus norvegicus (Rat).